The chain runs to 774 residues: Ras and Rab interactor 1 (774 aa).

An N-acetylmethionine modification is found at methionine 1. The interval 1 to 52 (MEDPGETEAHPLGATSLNFVPGYQQEEKPSPDPLYDTPDARGVQAGGSQQPA) is disordered. At serine 16 the chain carries Phosphoserine. The residue at position 35 (tyrosine 35) is a Phosphotyrosine; by ABL1 and ABL2. The SH2 domain maps to 68–162 (WLQLRANAAA…ILLLPLPLPR (95 aa)). 2 disordered regions span residues 188 to 211 (LNTK…RSPQ) and 249 to 342 (STET…RPRH). Serine 209, serine 257, serine 330, and serine 334 each carry phosphoserine. Pro residues predominate over residues 256–268 (LSPPAVPPPPVPV). A compositionally biased stretch (low complexity) spans 327–337 (SSGSPTTSPRL). Phosphoserine; by PKD/PRKD1 is present on serine 351. One can recognise a VPS9 domain in the interval 456 to 598 (LSTDGSLGRL…LSGLSQAHAL (143 aa)). Serine 609 is modified (phosphoserine). One can recognise a Ras-associating domain in the interval 624–706 (FQHLLRVAYQ…GYLIYRRAER (83 aa)). The residue at position 692 (arginine 692) is an Omega-N-methylarginine. A compositionally biased stretch (basic and acidic residues) spans 704–766 (AERPETQRAA…GHMQLEEQKA (63 aa)). The segment at 704–774 (AERPETQRAA…KAEGCPALEE (71 aa)) is disordered.

Belongs to the RIN (Ras interaction/interference) family. As to quaternary structure, interacts with the GTP-bound form of Ras proteins (NRAS, HRAS and KRAS). This interaction prevents the association between RAF1 and Ras. Interacts with 14-3-3 proteins YWHAB, YWHAE and YWHAZ when phosphorylated on Ser-351. Interacts with the SH3 domain of ABL1 and ABL2. Interacts with RAB5A. The interaction with Ras is probably regulated and antagonized by the interaction with 14-3-3 proteins. The interaction with 14-3-3 proteins is regulated by phosphorylation on Ser-351. Post-translationally, phosphorylated on tyrosine residues by ABL1 and ABL2. Phosphorylation at Ser-351 by PRKD1 induces interaction with 14-3-3 proteins.

The protein localises to the cytoplasm. It is found in the membrane. The protein resides in the cytoskeleton. In terms of biological role, ras effector protein, which may serve as an inhibitory modulator of neuronal plasticity in aversive memory formation. Can affect Ras signaling at different levels. First, by competing with RAF1 protein for binding to activated Ras. Second, by enhancing signaling from ABL1 and ABL2, which regulate cytoskeletal remodeling. Third, by activating RAB5A, possibly by functioning as a guanine nucleotide exchange factor (GEF) for RAB5A, by exchanging bound GDP for free GTP, and facilitating Ras-activated receptor endocytosis. The sequence is that of Ras and Rab interactor 1 (Rin1) from Rattus norvegicus (Rat).